Here is a 275-residue protein sequence, read N- to C-terminus: Reticulon-like protein B1 (275 aa).

Basic and acidic residues-rich tracts occupy residues 1–10 and 20–38; these read MAEEHKHDES and VVER…HHGG. Residues 1-68 are disordered; the sequence is MAEEHKHDES…PSSPSSSMKS (68 aa). N-acetylalanine is present on alanine 2. Residues 59-68 show a composition bias toward low complexity; sequence PSSPSSSMKS. Residues 89 to 274 form the Reticulon domain; it reads PADIFMWKNK…PLGPLKNKKK (186 aa). Transmembrane regions (helical) follow at residues 99–119, 120–140, and 194–214; these read KMSG…ELME, YHLL…LFLW, and FLIA…FNFL.

In terms of assembly, interacts with VirB2. In terms of tissue distribution, predominantly expressed in root tissues.

The protein resides in the endoplasmic reticulum membrane. The protein localises to the cell membrane. In terms of biological role, plays a role in the Agrobacterium-mediated plant transformation via its interaction with VirB2, the major component of the T-pilus. This chain is Reticulon-like protein B1 (RTNLB1), found in Arabidopsis thaliana (Mouse-ear cress).